Consider the following 290-residue polypeptide: Lysine export transcriptional regulatory protein LysG (290 aa).

One can recognise an HTH lysR-type domain in the interval 1-57; that stretch reads MNPIQLDTLLSIIDEGSFEGASLALSISPSAVSQRVKALEHHVGRVLVSRTQPAKAT. Positions 18–37 form a DNA-binding region, H-T-H motif; the sequence is FEGASLALSISPSAVSQRVK.

It belongs to the LysR transcriptional regulatory family.

Its function is as follows. Positively regulates the expression of the exporter LysE. Induction requires the presence of a coinducer, which is either intracellular L-lysine, L-arginine or L-citrulline. L-histidine also acts as a coinducer of lysE expression, but this amino acid is not exported by LysE. The lysEG system prevents bacteriostasis due to elevated L-lysine or L-arginine concentrations that arise during growth in the presence of peptides or in mutants possessing a deregulated biosynthesis pathway. In Corynebacterium glutamicum (strain ATCC 13032 / DSM 20300 / JCM 1318 / BCRC 11384 / CCUG 27702 / LMG 3730 / NBRC 12168 / NCIMB 10025 / NRRL B-2784 / 534), this protein is Lysine export transcriptional regulatory protein LysG.